Here is a 99-residue protein sequence, read N- to C-terminus: MKSAKLGFLLRFFIFCSLNTLLLGGVNKIAEKICGDLKDPCKLDMNFGSCYEVHFRYFYNRTSKRCETFVFSGCNGNLNNFKLKIEREVACVAKYKPPR.

The N-terminal stretch at 1–24 (MKSAKLGFLLRFFIFCSLNTLLLG) is a signal peptide. Positions 41 to 91 (CKLDMNFGSCYEVHFRYFYNRTSKRCETFVFSGCNGNLNNFKLKIEREVAC) constitute a BPTI/Kunitz inhibitor domain. 2 cysteine pairs are disulfide-bonded: Cys41–Cys91 and Cys50–Cys74.

Its subcellular location is the secreted. The chain is Kunitz-type protease inhibitor 4 (SPINT4) from Homo sapiens (Human).